The following is a 76-amino-acid chain: MLIPHDLLEADTLNNLLEDFVTREGTDNGDETPLDVRVERARHALRRGEAVILFDPESQQCQLMLRSEVPAELLRD.

This sequence belongs to the UPF0270 family.

The polypeptide is UPF0270 protein PSPA7_1664 (Pseudomonas paraeruginosa (strain DSM 24068 / PA7) (Pseudomonas aeruginosa (strain PA7))).